The following is a 204-amino-acid chain: Inactive ribonuclease-like protein 9 (204 aa).

The first 26 residues, 1 to 26 (MMRTLITIHPLPLLLLLQQLLQPVQF), serve as a signal peptide directing secretion. 3 cysteine pairs are disulfide-bonded: Cys97/Cys152, Cys115/Cys167, and Cys122/Cys129. N-linked (GlcNAc...) asparagine glycosylation is found at Asn130 and Asn142.

The protein belongs to the pancreatic ribonuclease family.

The protein resides in the secreted. In terms of biological role, does not exhibit any ribonuclease activity. This is Inactive ribonuclease-like protein 9 (RNASE9) from Pongo pygmaeus (Bornean orangutan).